The primary structure comprises 245 residues: Myelin protein P0 (245 aa).

Residues 1-28 form the signal peptide; that stretch reads MEPSGLRTPCSLLALVLLSALVLTPTLA. In terms of domain architecture, Ig-like V-type spans 29-143; it reads IEVYTDREVY…VGKSSYVHLQ (115 aa). The Extracellular segment spans residues 29–153; that stretch reads IEVYTDREVY…VQEKGPARAG (125 aa). A disulfide bond links Cys-49 and Cys-125. Residue Asn-120 is glycosylated (N-linked (GlcNAc...) asparagine). Residues 154-174 traverse the membrane as a helical segment; that stretch reads LILGIIIAVALALVIVVTILI. The Cytoplasmic portion of the chain corresponds to 175-245; that stretch reads LLIRYCWLRR…GIGDSRKDRK (71 aa). 2 stretches are compositionally biased toward basic and acidic residues: residues 199-208 and 224-245; these read KLHKAKDSSK and TRGKSSEKKAKGGIGDSRKDRK. A disordered region spans residues 199–245; sequence KLHKAKDSSKRSSRQTPILYAMLDQTRGKSSEKKAKGGIGDSRKDRK.

Belongs to the myelin P0 protein family.

Its subcellular location is the cell membrane. Its function is as follows. Creation of an extracellular membrane face which guides the wrapping process and ultimately compacts adjacent lamellae. The sequence is that of Myelin protein P0 (mpz) from Xenopus laevis (African clawed frog).